The following is an 84-amino-acid chain: Trefoil factor 1 (84 aa).

The first 24 residues, 1-24 (MATMENKVICALVLVSMLALGTLA), serve as a signal peptide directing secretion. One can recognise a P-type domain in the interval 29 to 72 (ETCTVAPRERQNCGFPGVTPSQCANKGCCFDDTVRGVPWCFYPN). Cystine bridges form between C31–C57, C41–C56, and C51–C68.

Heterodimer with GKN2; disulfide linked. Found in stomach, with highest levels in the upper gastric mucosal cells (at protein level). Detected in goblet cells of the small and large intestine and rectum, small submucosal glands in the esophagus, mucous acini of the sublingual gland, submucosal glands of the trachea, and epithelial cells lining the exocrine pancreatic ducts but not in the remainder of the pancreas (at protein level). Scattered expression is detected in the epithelial cells of the gallbladder and submucosal glands of the vagina, and weak expression is observed in the bronchial goblet cells of the pseudostratified epithelia in the respiratory system (at protein level). Detected in urine (at protein level). Strongly expressed in breast cancer but at low levels in normal mammary tissue. It is regulated by estrogen in MCF-7 cells. Strong expression found in normal gastric mucosa and in the regenerative tissues surrounding ulcerous lesions of gastrointestinal tract, but lower expression found in gastric cancer (at protein level).

The protein resides in the secreted. Functionally, stabilizer of the mucous gel overlying the gastrointestinal mucosa that provides a physical barrier against various noxious agents. May inhibit the growth of calcium oxalate crystals in urine. The sequence is that of Trefoil factor 1 (TFF1) from Homo sapiens (Human).